A 175-amino-acid polypeptide reads, in one-letter code: uncharacterized protein (175 aa).

The N-terminal 11 residues, 1–11, are a transit peptide targeting the mitochondrion; it reads METWRKGSFRN. Residues 24 to 92 form a disordered region; it reads RRLRRQSSVL…PRLYRESSSC (69 aa). Residues 41 to 63 show a composition bias toward basic and acidic residues; sequence GDHEEYSNREVIRELQGRPDGRR.

The protein localises to the mitochondrion. This is an uncharacterized protein from Homo sapiens (Human).